The sequence spans 252 residues: NAC domain-containing protein 23 (252 aa).

In terms of domain architecture, NAC spans 12-177 (MPPGFRFQPT…EMVLCRISNK (166 aa)). Residues 110–183 (TAVKRRFVFY…ISNKDLPKPP (74 aa)) mediate DNA binding. Positions 225 to 252 (VDDAAAGTDDPGDLDEEIDDSMQRNHGG) are disordered. Over residues 234-244 (DPGDLDEEIDD) the composition is skewed to acidic residues.

In terms of assembly, forms heterodimers with NAC26. In terms of tissue distribution, expressed in stems and panicles. Expressed in developing endosperm.

It is found in the nucleus. It localises to the cytoplasm. Its function is as follows. Transcription factor involved in the regulation of seed size. Binds to DNA-specific sequences of CLPD1 and OAT promoters in vitro. The sequence is that of NAC domain-containing protein 23 from Oryza sativa subsp. japonica (Rice).